The chain runs to 226 residues: Cytidylate kinase (226 aa).

ATP is bound at residue 10–18; that stretch reads GPASSGKST.

It localises to the cytoplasm. The catalysed reaction is CMP + ATP = CDP + ADP. The enzyme catalyses dCMP + ATP = dCDP + ADP. The polypeptide is Cytidylate kinase (Streptococcus pyogenes serotype M6 (strain ATCC BAA-946 / MGAS10394)).